Consider the following 667-residue polypeptide: Probable potassium transport system protein Kup (667 aa).

The next 12 helical transmembrane spans lie at 5 to 25 (GLLIAIGIVYGDIGTSPLYVM), 47 to 67 (ISLILWTVTLLTTVQTVIIAL), 88 to 108 (AAWLVWPALIGGAAILADGTL), 133 to 153 (VSNQTTVLVITIVILLVLFSI), 164 to 184 (AFGPIMLVWFAFLGVMGLINI), 210 to 230 (AGFAILGSIFLATTGAEALYS), 243 to 263 (SWPFVFVCLSLNYFGQGVWIL), 287 to 307 (LASIVLATLAAIIASQALITG), 336 to 356 (IYIPAVNKMLGITTIALVLFF), 367 to 387 (GLSITISMLTTTILLYEWLVL), 393 to 413 (LANLLFVIFFSTINILFMGSS), and 420 to 440 (GGYVSLLITLLIASVMVVWYF).

This sequence belongs to the HAK/KUP transporter (TC 2.A.72) family.

The protein localises to the cell membrane. It carries out the reaction K(+)(in) + H(+)(in) = K(+)(out) + H(+)(out). In terms of biological role, transport of potassium into the cell. Likely operates as a K(+):H(+) symporter. This Lactobacillus delbrueckii subsp. bulgaricus (strain ATCC 11842 / DSM 20081 / BCRC 10696 / JCM 1002 / NBRC 13953 / NCIMB 11778 / NCTC 12712 / WDCM 00102 / Lb 14) protein is Probable potassium transport system protein Kup.